Reading from the N-terminus, the 225-residue chain is Small ribosomal subunit protein uS5 (225 aa).

The S5 DRBM domain occupies 57–120 (LEEQVLDVKL…AHAKLSLIKV (64 aa)).

This sequence belongs to the universal ribosomal protein uS5 family. In terms of assembly, part of the 30S ribosomal subunit. Contacts protein S4.

Functionally, with S4 and S12 plays an important role in translational accuracy. The sequence is that of Small ribosomal subunit protein uS5 from Methanococcus maripaludis (strain DSM 14266 / JCM 13030 / NBRC 101832 / S2 / LL).